Here is a 523-residue protein sequence, read N- to C-terminus: Putative oxidoreductase TDA3 (523 aa).

Low complexity predominate over residues 157-172 (NSSLSSSGSSLKNDSA). The segment at 157–189 (NSSLSSSGSSLKNDSASNEEEGSDIHVSSSVPS) is disordered. Residues serine 189, serine 204, and serine 306 each carry the phosphoserine modification.

This sequence belongs to the TDA3 family. Interacts with BTN2.

The protein localises to the cytoplasm. It localises to the late endosome. Its function is as follows. Putative oxidoreductase that negatively regulates the retrieval of cargo from late endosomes to the Golgi. Regulates YIF1 and KEX2 localization. Required for fast DNA replication. In Saccharomyces cerevisiae (strain ATCC 204508 / S288c) (Baker's yeast), this protein is Putative oxidoreductase TDA3 (TDA3).